We begin with the raw amino-acid sequence, 379 residues long: MALRKTHPLLKIANDALVDLPAPSNISAWWNFGSLLGLCLATQILTGLFLAMHYTSDIATAFSSVTHICRDVNYGWLIRNMHANGASFFFICIYMHIARGLYYGSYLYKETWNVGVILLLLVMMTAFVGYVLPWGQMSFWGATVITNLLSAVPYVGNALVQWIWGGFSVDNATLTRFFAFHFLFPFVIAAVTVIHLLFLHETGSNNPAGINSDADKISFHPYFSYKDLLGFIIMMVALTSLALFSPNLLGDPDNFTPANPLVTPPHIKPEWYFLFAYAILRSIPNKLGGVLALLASILVLMLVPFLHTSKQRGLTFRPLTQILFWTFVANVIILTWIGGMPVEHPFIIIGQVASFLYFLLLLVLSPLAGWVENKALSWA.

A run of 4 helical transmembrane segments spans residues 32–52 (FGSLLGLCLATQILTGLFLAM), 76–97 (WLIRNMHANGASFFFICIYMHI), 112–132 (WNVGVILLLLVMMTAFVGYVL), and 177–197 (FFAFHFLFPFVIAAVTVIHLL). Positions 82 and 96 each coordinate heme b. Heme b-binding residues include histidine 181 and histidine 195. An a ubiquinone-binding site is contributed by histidine 200. The next 4 membrane-spanning stretches (helical) occupy residues 225-245 (YKDLLGFIIMMVALTSLALFS), 287-307 (LGGVLALLASILVLMLVPFLH), 319-339 (LTQILFWTFVANVIILTWIGG), and 346-366 (FIIIGQVASFLYFLLLLVLSP).

This sequence belongs to the cytochrome b family. In terms of assembly, the cytochrome bc1 complex contains 3 respiratory subunits (MT-CYB, CYC1 and UQCRFS1), 2 core proteins (UQCRC1 and UQCRC2) and probably 6 low-molecular weight proteins. Requires heme b as cofactor.

The protein localises to the mitochondrion inner membrane. Component of the ubiquinol-cytochrome c reductase complex (complex III or cytochrome b-c1 complex) that is part of the mitochondrial respiratory chain. The b-c1 complex mediates electron transfer from ubiquinol to cytochrome c. Contributes to the generation of a proton gradient across the mitochondrial membrane that is then used for ATP synthesis. The protein is Cytochrome b (mt-cyb) of Chlorophthalmus agassizi (Shortnose greeneye).